The primary structure comprises 211 residues: tRNA (guanine-N(7)-)-methyltransferase (211 aa).

Residues Glu44, Asp69, Asp96, and Asp118 each contribute to the S-adenosyl-L-methionine site. Asp118 is a catalytic residue. Lys122 contacts substrate. An interaction with RNA region spans residues 124-129 (RHEKRR). Substrate contacts are provided by residues Asp154 and 191–194 (TEYE).

It belongs to the class I-like SAM-binding methyltransferase superfamily. TrmB family.

The catalysed reaction is guanosine(46) in tRNA + S-adenosyl-L-methionine = N(7)-methylguanosine(46) in tRNA + S-adenosyl-L-homocysteine. The protein operates within tRNA modification; N(7)-methylguanine-tRNA biosynthesis. In terms of biological role, catalyzes the formation of N(7)-methylguanine at position 46 (m7G46) in tRNA. The chain is tRNA (guanine-N(7)-)-methyltransferase from Streptococcus pneumoniae (strain JJA).